Here is a 186-residue protein sequence, read N- to C-terminus: Dynactin subunit 3 (186 aa).

The residue at position 2 (Ala-2) is an N-acetylalanine. A coiled-coil region spans residues 46-66 (NIASKRERVKILYKKIEDLIK).

This sequence belongs to the dynactin subunit 3 family. As to quaternary structure, subunit of dynactin, a multiprotein complex part of a tripartite complex with dynein and a adapter, such as BICDL1, BICD2 or HOOK3. The dynactin complex is built around ACTR1A/ACTB filament and consists of an actin-related filament composed of a shoulder domain, a pointed end and a barbed end. Its length is defined by its flexible shoulder domain. The soulder is composed of 2 DCTN1 subunits, 4 DCTN2 and 2 DCTN3. The 4 DCNT2 (via N-terminus) bind the ACTR1A filament and act as molecular rulers to determine the length. The pointed end is important for binding dynein-dynactin cargo adapters. Consists of 4 subunits: ACTR10, DCNT4, DCTN5 and DCTN6. The barbed end is composed of a CAPZA1:CAPZB heterodimers, which binds ACTR1A/ACTB filament and dynactin and stabilizes dynactin.

Its subcellular location is the cytoplasm. The protein resides in the cytoskeleton. It localises to the microtubule organizing center. It is found in the centrosome. The protein localises to the chromosome. Its subcellular location is the centromere. The protein resides in the kinetochore. It localises to the spindle. It is found in the cleavage furrow. The protein localises to the midbody. Part of the dynactin complex that activates the molecular motor dynein for ultra-processive transport along microtubules. Together with dynein may be involved in spindle assembly and cytokinesis. This chain is Dynactin subunit 3, found in Mus musculus (Mouse).